Here is a 428-residue protein sequence, read N- to C-terminus: Serine--tRNA ligase (428 aa).

233-235 (TAE) provides a ligand contact to L-serine. 264–266 (RRE) contacts ATP. An L-serine-binding site is contributed by Glu287. Position 351–354 (351–354 (EVSS)) interacts with ATP. Ser387 lines the L-serine pocket.

It belongs to the class-II aminoacyl-tRNA synthetase family. Type-1 seryl-tRNA synthetase subfamily. As to quaternary structure, homodimer. The tRNA molecule binds across the dimer.

The protein localises to the cytoplasm. It carries out the reaction tRNA(Ser) + L-serine + ATP = L-seryl-tRNA(Ser) + AMP + diphosphate + H(+). It catalyses the reaction tRNA(Sec) + L-serine + ATP = L-seryl-tRNA(Sec) + AMP + diphosphate + H(+). It functions in the pathway aminoacyl-tRNA biosynthesis; selenocysteinyl-tRNA(Sec) biosynthesis; L-seryl-tRNA(Sec) from L-serine and tRNA(Sec): step 1/1. Functionally, catalyzes the attachment of serine to tRNA(Ser). Is also able to aminoacylate tRNA(Sec) with serine, to form the misacylated tRNA L-seryl-tRNA(Sec), which will be further converted into selenocysteinyl-tRNA(Sec). The chain is Serine--tRNA ligase from Salinibacter ruber (strain DSM 13855 / M31).